Consider the following 425-residue polypeptide: Glutamyl-tRNA reductase (425 aa).

Residues 49–52 (TCNR), Ser109, 114–116 (EGQ), and Gln120 contribute to the substrate site. The active-site Nucleophile is the Cys50. Residue 189 to 194 (GAGETG) coordinates NADP(+).

This sequence belongs to the glutamyl-tRNA reductase family. In terms of assembly, homodimer.

The catalysed reaction is (S)-4-amino-5-oxopentanoate + tRNA(Glu) + NADP(+) = L-glutamyl-tRNA(Glu) + NADPH + H(+). It functions in the pathway porphyrin-containing compound metabolism; protoporphyrin-IX biosynthesis; 5-aminolevulinate from L-glutamyl-tRNA(Glu): step 1/2. It participates in porphyrin-containing compound metabolism; chlorophyll biosynthesis. In terms of biological role, catalyzes the NADPH-dependent reduction of glutamyl-tRNA(Glu) to glutamate 1-semialdehyde (GSA). This is Glutamyl-tRNA reductase from Pelodictyon phaeoclathratiforme (strain DSM 5477 / BU-1).